Reading from the N-terminus, the 335-residue chain is Methionine import ATP-binding protein MetN 2 (335 aa).

An ABC transporter domain is found at I2–V242. G38 to S45 serves as a coordination point for ATP.

It belongs to the ABC transporter superfamily. Methionine importer (TC 3.A.1.24) family. As to quaternary structure, the complex is composed of two ATP-binding proteins (MetN), two transmembrane proteins (MetI) and a solute-binding protein (MetQ).

Its subcellular location is the cell inner membrane. The enzyme catalyses L-methionine(out) + ATP + H2O = L-methionine(in) + ADP + phosphate + H(+). It catalyses the reaction D-methionine(out) + ATP + H2O = D-methionine(in) + ADP + phosphate + H(+). Functionally, part of the ABC transporter complex MetNIQ involved in methionine import. Responsible for energy coupling to the transport system. The protein is Methionine import ATP-binding protein MetN 2 of Pseudomonas syringae pv. tomato (strain ATCC BAA-871 / DC3000).